A 421-amino-acid polypeptide reads, in one-letter code: Replication factor C large subunit (421 aa).

Gly63–Thr70 serves as a coordination point for ATP.

It belongs to the activator 1 small subunits family. RfcL subfamily. As to quaternary structure, heteromultimer composed of small subunits (RfcS) and large subunits (RfcL).

Its function is as follows. Part of the RFC clamp loader complex which loads the PCNA sliding clamp onto DNA. This is Replication factor C large subunit from Pyrobaculum calidifontis (strain DSM 21063 / JCM 11548 / VA1).